We begin with the raw amino-acid sequence, 469 residues long: MTTPVRTRFAPSPTGFIHLGNIRSALYPWAFARKSKGVFVLRIEDTDVERSTEQSVDAILEGMQWLGLDYDEGPFYQMQRMDRYREVLKHMQEQGLVYPCYMSTEELDALRERQRASGEKPRYDGTWRPEPGKVLPTPPAGVQPVLRFRNPLTGVVAWDDAVKGRVEISNEELDDLVIARPDGTPTYNFCVVVDDLDMKITHVIRGDDHVNNTPRQINILRALGGEPPVYAHLPTVLNEQGEKMSKRHGAMSVMGYRDAGYLPEAVLNYLARLGWSHGDAEIFSREQLIEWFDLEHLGKSPAQYDHNKLNWLNNHYIKEADNARLADLSKPFFAALGIDEPTLAKGADLVSVIALMKDRASTVKEVVDNAAMFYREPNPDADALAQHVTDAVRPALADLAAALKACEWTKEGIAAALKATLGAHKLKMPQLAMPVRVLVAGTTHTPSIDSVLMLFGRDVVVSRIEKAVV.

Positions 11-21 (PSPTGFIHLGN) match the 'HIGH' region motif. Positions 116-131 (ASGEKPRYDGTWRPEP) are enriched in basic and acidic residues. Residues 116-139 (ASGEKPRYDGTWRPEPGKVLPTPP) are disordered. Residues 243-247 (KMSKR) carry the 'KMSKS' region motif. Residue Lys-246 coordinates ATP.

The protein belongs to the class-I aminoacyl-tRNA synthetase family. Glutamate--tRNA ligase type 1 subfamily. In terms of assembly, monomer.

It is found in the cytoplasm. It catalyses the reaction tRNA(Glu) + L-glutamate + ATP = L-glutamyl-tRNA(Glu) + AMP + diphosphate. Catalyzes the attachment of glutamate to tRNA(Glu) in a two-step reaction: glutamate is first activated by ATP to form Glu-AMP and then transferred to the acceptor end of tRNA(Glu). The chain is Glutamate--tRNA ligase from Paraburkholderia phymatum (strain DSM 17167 / CIP 108236 / LMG 21445 / STM815) (Burkholderia phymatum).